The chain runs to 137 residues: Transcription antitermination protein NusB (137 aa).

It belongs to the NusB family.

Functionally, involved in transcription antitermination. Required for transcription of ribosomal RNA (rRNA) genes. Binds specifically to the boxA antiterminator sequence of the ribosomal RNA (rrn) operons. The protein is Transcription antitermination protein NusB of Aeromonas salmonicida (strain A449).